Here is a 395-residue protein sequence, read N- to C-terminus: Chalcone synthase (395 aa).

Residue cysteine 164 is part of the active site.

It belongs to the thiolase-like superfamily. Chalcone/stilbene synthases family.

The catalysed reaction is (E)-4-coumaroyl-CoA + 3 malonyl-CoA + 3 H(+) = 2',4,4',6'-tetrahydroxychalcone + 3 CO2 + 4 CoA. The protein operates within secondary metabolite biosynthesis; flavonoid biosynthesis. Functionally, the primary product of this enzyme is 4,2',4',6'-tetrahydroxychalcone (also termed naringenin-chalcone or chalcone) which can under specific conditions spontaneously isomerize into naringenin. This Betula pendula (European white birch) protein is Chalcone synthase (CHS).